A 250-amino-acid polypeptide reads, in one-letter code: Indole-3-glycerol phosphate synthase (250 aa).

It belongs to the TrpC family.

The enzyme catalyses 1-(2-carboxyphenylamino)-1-deoxy-D-ribulose 5-phosphate + H(+) = (1S,2R)-1-C-(indol-3-yl)glycerol 3-phosphate + CO2 + H2O. It participates in amino-acid biosynthesis; L-tryptophan biosynthesis; L-tryptophan from chorismate: step 4/5. The chain is Indole-3-glycerol phosphate synthase from Bacillus velezensis (strain DSM 23117 / BGSC 10A6 / LMG 26770 / FZB42) (Bacillus amyloliquefaciens subsp. plantarum).